The chain runs to 407 residues: Putative nickel insertion protein (407 aa).

The protein belongs to the LarC family.

This Gloeothece citriformis (strain PCC 7424) (Cyanothece sp. (strain PCC 7424)) protein is Putative nickel insertion protein.